The primary structure comprises 811 residues: Probable potassium transporter 16 (811 aa).

The Cytoplasmic portion of the chain corresponds to 1-66 (MAQQQAGARG…GQESWMRTLR (66 aa)). A helical membrane pass occupies residues 67–87 (LGFQCVGILHADLGTSPLYVY). Residues 88 to 100 (QNTFKYGIKHEDD) lie on the Extracellular side of the membrane. Residues 101-121 (IIGVLSLIIYSFVLFTMVKIV) traverse the membrane as a helical segment. Over 122–190 (FIALHANDDG…KSQLEKKPAK (69 aa)) the chain is Cytoplasmic. The helical transmembrane segment at 191–211 (IAVFFLTIFATALAISDCVLN) threads the bilayer. At 212–228 (PSVSVLSAVNGLKLRAP) the chain is on the extracellular side. Residues 229-249 (HLTTDEVVWITVGILVVFFAV) form a helical membrane-spanning segment. The Cytoplasmic portion of the chain corresponds to 250 to 256 (QRFGTDK). A helical transmembrane segment spans residues 257 to 277 (IGYTFAPVVVVWLLLISGIGI). Residues 278 to 310 (YDLVKYDVGVLRAFNPKYIIDYFRRNKKDGWVQ) are Extracellular-facing. A helical membrane pass occupies residues 311-331 (LGEVLLTFTGTEALFADLGYF). The Cytoplasmic portion of the chain corresponds to 332-337 (SIKSIQ). The helical transmembrane segment at 338 to 358 (LSSTFVLLPSVLCTYIGQAAY) threads the bilayer. Over 359–379 (LRKHMDQQHIQNAFFNSIPRP) the chain is Extracellular. Residues 380 to 400 (LFWPMFVLAIMTSVIGCQAMV) form a helical membrane-spanning segment. Topologically, residues 401-438 (SCAFATMSHLQTLNCFPRIKILHTSRRYSGQLYSPEVN) are cytoplasmic. Residues 439–459 (FFLCLLSCVITLSFRTTGFIV) traverse the membrane as a helical segment. Topologically, residues 460–463 (KAHE) are extracellular. The helical transmembrane segment at 464-484 (ICVVLVMVITTILMTIVMLLV) threads the bilayer. At 485–488 (WKVN) the chain is on the cytoplasmic side. Residues 489–509 (IWWIVLFFVVFMSTETVYLSA) traverse the membrane as a helical segment. Residues 510 to 519 (VLYKFTKGPY) lie on the Extracellular side of the membrane. The chain crosses the membrane as a helical span at residues 520-540 (MPLAMSAVLMVIMFVWHYVHV). At 541–811 (KRYKFELEHT…LLKVGITYEI (271 aa)) the chain is on the cytoplasmic side.

Belongs to the HAK/KUP transporter (TC 2.A.72.3) family.

Its subcellular location is the membrane. In terms of biological role, high-affinity potassium transporter. In Oryza sativa subsp. japonica (Rice), this protein is Probable potassium transporter 16 (HAK16).